The following is a 599-amino-acid chain: Putative sensor histidine kinase NtrY-like (599 aa).

4 consecutive transmembrane segments (helical) span residues 17-37 (VLIF…FYVI), 44-64 (FSTI…LGVV), 85-105 (IVIA…VFSV), and 285-305 (IMFI…GVIF). Residues 307–361 (AKIVKPIKKLVTATDNVKDGDLTVQVPENEVDKDEIGTLYVAFNRMIKQLSRQQR) form the HAMP domain. A Histidine kinase domain is found at 378-589 (KVAHEIKNPL…IIDIKFDLKE (212 aa)). Phosphohistidine; by autocatalysis is present on histidine 381.

Its subcellular location is the cell membrane. It carries out the reaction ATP + protein L-histidine = ADP + protein N-phospho-L-histidine.. Functionally, member of the two-component regulatory system RC0948/RC0849. The sequence is that of Putative sensor histidine kinase NtrY-like from Rickettsia conorii (strain ATCC VR-613 / Malish 7).